The primary structure comprises 163 residues: Retinoic acid receptor responder protein 2 (163 aa).

Residues 1–20 (MRRLLIPLALWLGAVGVGVA) form the signal peptide. Cystine bridges form between Cys-77–Cys-87, Cys-98–Cys-117, and Cys-101–Cys-135. Residues 158–163 (KALPRS) constitute a propeptide that is removed on maturation.

Post-translationally, secreted in an inactive precursor form, prochemerin, which is proteolytically processed by a variety of extracellular proteases to generate forms with differing levels of bioactivity. For example, the removal of six amino acids results in chemerin-157, which exhibits the highest activity, while removal of seven amino acids results in chemerin-156 which has slightly less activity. Some proteases are able to cleave at more than one site and chemerin forms may be sequentially processed by different enzymes to modulate activity levels. The coordinated expression and activity of chemerin-modifying enzymes is essential for regulating its bioactivation, inactivation and, consequently, biological function. Cathepsin G cleaves seven C-terminal amino acids from prochemerin (chemerin-156), elastase is able to cleave six (chemerin-157), eight (chemerin-155) or eleven (chemerin-152), plasmin cleaves five amino acids (chemerin-158), and tryptase cleaves five (chemerin-158) or eight (chemerin-155). Multiple cleavages might be required to fully activate chemerin, with an initial tryptase cleavage resulting in chemerin with low activity (chemerin-158), and a second cleavage by carboxypeptidase N or B producing highly active chemerin (chemerin-157). In terms of tissue distribution, expressed at the highest levels in placenta, liver, and white adipose tissue (WAT), and to a lesser extent in many other tissues such as lung, brown adipose tissue, heart, ovary, kidney, skeletal muscle and pancreas. Within WAT, expression is enriched in adipocytes as compared to the stromal vascular fraction. Expression and secretion increases dramatically with adipogenesis. Highly expressed in skin (basal and suprabasal layers of the epidermis, hair follicles and endothelial cells). Expression is elevated in numerous metabolic and inflammatory diseases including psoriasis, obesity, type 2 diabetes, metabolic syndrome and cardiovascular disease.

It localises to the secreted. Its function is as follows. Adipocyte-secreted protein (adipokine) that regulates adipogenesis, metabolism and inflammation through activation of the chemokine-like receptor 1 (CMKLR1). Also acts as a ligand for CMKLR2. Can also bind to C-C chemokine receptor-like 2 (CCRL2), but with a lower affinity than it does to CMKLR1 or CMKLR2. Positively regulates adipocyte differentiation, modulates the expression of adipocyte genes involved in lipid and glucose metabolism and might play a role in angiogenesis, a process essential for the expansion of white adipose tissue. Also acts as a pro-inflammatory adipokine, causing an increase in secretion of pro-inflammatory and prodiabetic adipokines, which further impair adipose tissue metabolic function and have negative systemic effects including impaired insulin sensitivity, altered glucose and lipid metabolism, and a decrease in vascular function in other tissues. Can have both pro- and anti-inflammatory properties depending on the modality of enzymatic cleavage by different classes of proteases. Acts as a chemotactic factor for leukocyte populations expressing CMKLR1, particularly immature plasmacytoid dendritic cells, but also immature myeloid DCs, macrophages and natural killer cells. Exerts an anti-inflammatory role by preventing TNF/TNFA-induced VCAM1 expression and monocytes adhesion in vascular endothelial cells. The effect is mediated via inhibiting activation of NF-kappa-B and CRK/p38 through stimulation of AKT1/NOS3 signaling and nitric oxide production. Its dual role in inflammation and metabolism might provide a link between chronic inflammation and obesity, as well as obesity-related disorders such as type 2 diabetes and cardiovascular disease. Exhibits an antimicrobial function in the skin. This is Retinoic acid receptor responder protein 2 (RARRES2) from Homo sapiens (Human).